Here is a 143-residue protein sequence, read N- to C-terminus: MSLSDKDKAAVKALWSKIAKSADVIGNDAVSRMIVVYPQTKTYFAHWPDLTPGSTNIKAHGKKVMGGIALAVSKIDDLKAGLSDLSEQHAFKLRVDPANFKILNHCIMVVISSMFPKDFTPEAHISLDKFLSAVALALAEKYR.

Position 2 is an N-acetylserine (Ser-2). The Globin domain maps to 2 to 143; that stretch reads SLSDKDKAAV…VALALAEKYR (142 aa). Residue His-60 coordinates O2. His-89 contributes to the heme b binding site.

It belongs to the globin family. In terms of assembly, heterotetramer of two alpha chains and two beta chains. As to expression, red blood cells.

Its function is as follows. Involved in oxygen transport from the lung to the various peripheral tissues. This is Hemoglobin subunit alpha (hba) from Artedidraco orianae (Barbeled plunderfish).